A 327-amino-acid polypeptide reads, in one-letter code: Glycerol-3-phosphate dehydrogenase [NAD(P)+] (327 aa).

3 residues coordinate NADPH: F13, R34, and K107. Residues K107 and G135 each contribute to the sn-glycerol 3-phosphate site. Position 139 (A139) interacts with NADPH. Positions 190, 243, 253, 254, and 255 each coordinate sn-glycerol 3-phosphate. The active-site Proton acceptor is K190. Position 254 (R254) interacts with NADPH. Residues V276 and E277 each coordinate NADPH.

It belongs to the NAD-dependent glycerol-3-phosphate dehydrogenase family.

Its subcellular location is the cytoplasm. The catalysed reaction is sn-glycerol 3-phosphate + NAD(+) = dihydroxyacetone phosphate + NADH + H(+). It catalyses the reaction sn-glycerol 3-phosphate + NADP(+) = dihydroxyacetone phosphate + NADPH + H(+). The protein operates within membrane lipid metabolism; glycerophospholipid metabolism. Catalyzes the reduction of the glycolytic intermediate dihydroxyacetone phosphate (DHAP) to sn-glycerol 3-phosphate (G3P), the key precursor for phospholipid synthesis. The polypeptide is Glycerol-3-phosphate dehydrogenase [NAD(P)+] (Rhizobium etli (strain CIAT 652)).